Consider the following 255-residue polypeptide: tRNA (guanine-N(1)-)-methyltransferase (255 aa).

Residues glycine 113 and 133–138 (IGDYVL) each bind S-adenosyl-L-methionine.

The protein belongs to the RNA methyltransferase TrmD family. In terms of assembly, homodimer.

Its subcellular location is the cytoplasm. It carries out the reaction guanosine(37) in tRNA + S-adenosyl-L-methionine = N(1)-methylguanosine(37) in tRNA + S-adenosyl-L-homocysteine + H(+). In terms of biological role, specifically methylates guanosine-37 in various tRNAs. This chain is tRNA (guanine-N(1)-)-methyltransferase, found in Escherichia coli O6:K15:H31 (strain 536 / UPEC).